The following is a 471-amino-acid chain: Ribulose bisphosphate carboxylase large chain 2 (471 aa).

Substrate is bound by residues asparagine 116 and threonine 166. Residue lysine 168 is the Proton acceptor of the active site. Lysine 170 lines the substrate pocket. Lysine 194, aspartate 196, and glutamate 197 together coordinate Mg(2+). Lysine 194 is subject to N6-carboxylysine. Histidine 287 functions as the Proton acceptor in the catalytic mechanism. Substrate-binding residues include arginine 288, histidine 320, and serine 372.

This sequence belongs to the RuBisCO large chain family. Type I subfamily. As to quaternary structure, heterohexadecamer of 8 large chains and 8 small chains; disulfide-linked. The disulfide link is formed within the large subunit homodimers. The cofactor is Mg(2+). The disulfide bond which can form in the large chain dimeric partners within the hexadecamer appears to be associated with oxidative stress and protein turnover.

The enzyme catalyses 2 (2R)-3-phosphoglycerate + 2 H(+) = D-ribulose 1,5-bisphosphate + CO2 + H2O. The catalysed reaction is D-ribulose 1,5-bisphosphate + O2 = 2-phosphoglycolate + (2R)-3-phosphoglycerate + 2 H(+). Functionally, ruBisCO catalyzes two reactions: the carboxylation of D-ribulose 1,5-bisphosphate, the primary event in carbon dioxide fixation, as well as the oxidative fragmentation of the pentose substrate. Both reactions occur simultaneously and in competition at the same active site. The sequence is that of Ribulose bisphosphate carboxylase large chain 2 from Allochromatium vinosum (strain ATCC 17899 / DSM 180 / NBRC 103801 / NCIMB 10441 / D) (Chromatium vinosum).